The primary structure comprises 124 residues: Fluoride-specific ion channel FluC (124 aa).

The next 4 helical transmembrane spans lie at leucine 4–phenylalanine 24, phenylalanine 35–glycine 55, isoleucine 60–serine 80, and valine 102–serine 122. Positions 74 and 77 each coordinate Na(+).

The protein belongs to the fluoride channel Fluc/FEX (TC 1.A.43) family.

The protein localises to the cell inner membrane. The catalysed reaction is fluoride(in) = fluoride(out). Its activity is regulated as follows. Na(+) is not transported, but it plays an essential structural role and its presence is essential for fluoride channel function. Functionally, fluoride-specific ion channel. Important for reducing fluoride concentration in the cell, thus reducing its toxicity. The protein is Fluoride-specific ion channel FluC of Shewanella sp. (strain ANA-3).